A 205-amino-acid polypeptide reads, in one-letter code: MPVVFVAASKLPTPFATFTMNGFLEEATGREHVVLSLGDIADGAPVLGRVHSECLTGDALFSQRCDCGSQLEAAMRAIAREGRGVLLYLRQEGRGIGLMNKIRAYELQDGGADTVEANERLGFAADQRDYAICLPMLEHLGVSSLRLMTNNPRKVKALTEMGITVAERVPLHTGHNPHNKLYLATKASKLDHMMGNEHQGEVDRA.

Arg49–Glu53 serves as a coordination point for GTP. Cys54, Cys65, and Cys67 together coordinate Zn(2+). GTP contacts are provided by residues Gln70, Glu92 to Arg94, and Thr114. Catalysis depends on Asp126, which acts as the Proton acceptor. The Nucleophile role is filled by Arg128. GTP-binding residues include Thr149 and Lys154.

The protein belongs to the GTP cyclohydrolase II family. Zn(2+) is required as a cofactor.

It carries out the reaction GTP + 4 H2O = 2,5-diamino-6-hydroxy-4-(5-phosphoribosylamino)-pyrimidine + formate + 2 phosphate + 3 H(+). The protein operates within cofactor biosynthesis; riboflavin biosynthesis; 5-amino-6-(D-ribitylamino)uracil from GTP: step 1/4. Its function is as follows. Catalyzes the conversion of GTP to 2,5-diamino-6-ribosylamino-4(3H)-pyrimidinone 5'-phosphate (DARP), formate and pyrophosphate. This is GTP cyclohydrolase-2 from Pseudomonas fluorescens (strain SBW25).